The primary structure comprises 279 residues: Octanoyl-[GcvH]:protein N-octanoyltransferase (279 aa).

A BPL/LPL catalytic domain is found at 48–253 (ETSPPVIRLW…TLEKLSDEIV (206 aa)). Cysteine 152 acts as the Acyl-thioester intermediate in catalysis.

This sequence belongs to the octanoyltransferase LipL family.

It catalyses the reaction N(6)-octanoyl-L-lysyl-[glycine-cleavage complex H protein] + L-lysyl-[lipoyl-carrier protein] = N(6)-octanoyl-L-lysyl-[lipoyl-carrier protein] + L-lysyl-[glycine-cleavage complex H protein]. It participates in protein modification; protein lipoylation via endogenous pathway; protein N(6)-(lipoyl)lysine from octanoyl-[acyl-carrier-protein]. In terms of biological role, catalyzes the amidotransfer (transamidation) of the octanoyl moiety from octanoyl-GcvH to the lipoyl domain of the E2 subunit of lipoate-dependent enzymes. The chain is Octanoyl-[GcvH]:protein N-octanoyltransferase from Oceanobacillus iheyensis (strain DSM 14371 / CIP 107618 / JCM 11309 / KCTC 3954 / HTE831).